The sequence spans 873 residues: MESKVIVIHHGSHSLKIGLASESVPKTIPNYIARKKKEKISTPTITTTETPTIVSPVESTIINNKSNENNDDIMKIDVENTVTPSEAVGTTTEDVKSTLPMATTITTDEQVKPTSSTSSTSTTEEVEIKPTESMDIDKPITDSKTNITSNIKIEQPPPPINIQTQTKIHIPKKLLEEVEQSVKETTKLLPPVDYIKVRQKPTLYNENNSTTFEIIKKKKKKTSSLSSLTNVSTTPPPYVPQPLNYNEIDYCIGDDAIAVSRDKDKWFAYQPITMSTFNTGIYHSVQSMFDDITQMWKYAIQRYLNIPSSDLSSYGCVYVVTDNIDRKSLKQITTLLLKELQFTSVLFFQESICSSFGVSMATQSCVIDLGHQKISIACVDEGYLLPNTRLTLGYGGEQLTKLLEYLLTGMDKSDSDTLTRQMVAKQIHKYYFPFKSSIYELVDFSPFYLNVFDNIKIENLDYYYNDFQKQRVGTFKVKDIKHDKHMNIYHFNADEVYQVVGMSLFYPNILSQFGGSSVNYLIKSRSLANTSESNLYVEDQKHYYNHYLSSYDHEDPFDDHSHILSFAQNNTSRDNKDGSNNNNIINNNIINNIINNNNNNNNNSSSSSNNNNNNNNSGSNSNINSYNNNNNNNNNNNNNNNNNNNNSFNNVTIVTSTLNSNSTVPSTLNSNSTVPSISNSNSTVPSTSTSTTSSPTKKLKIESSSNCEDNYIDIPLDIAILKSVSQLERSDINKKKYLSNILLVGGGALAPGIQDVLRVCIFKQLEQQYQAQQLQFQQQLQQQQQQQQQLQQQLQNSTNSATTTPTPSSTTIMPLENYIGFANSSIRSDVDCRHAGWRGGAILGCLESTREIWITRSEWQDGKNSSALNKLPF.

The tract at residues 108 to 129 is disordered; sequence DEQVKPTSSTSSTSTTEEVEIK. Residues 114-123 are compositionally biased toward low complexity; that stretch reads TSSTSSTSTT. 368-371 serves as a coordination point for ATP; the sequence is DLGH. The segment covering 596–650 has biased composition (low complexity); the sequence is NNNNNNNNSSSSSNNNNNNNNSGSNSNINSYNNNNNNNNNNNNNNNNNNNNSFNN. The disordered stretch occupies residues 596-701; it reads NNNNNNNNSS…TSSPTKKLKI (106 aa). Polar residues predominate over residues 651-668; sequence VTIVTSTLNSNSTVPSTL. Over residues 669-696 the composition is skewed to low complexity; the sequence is NSNSTVPSISNSNSTVPSTSTSTTSSPT. Residues 762–804 are a coiled coil; that stretch reads FKQLEQQYQAQQLQFQQQLQQQQQQQQQLQQQLQNSTNSATTT.

It belongs to the actin family. ARP8 subfamily. As to quaternary structure, component of the chromatin remodeling INO80 complex. Exists as monomers and dimers, but the dimer is most probably the biologically relevant form required for stable interactions with histones that exploits the twofold symmetry of the nucleosome core.

The protein localises to the nucleus. Its subcellular location is the cytoplasm. The protein resides in the cytoskeleton. Plays an important role in the functional organization of mitotic chromosomes. Exhibits low basal ATPase activity, and unable to polymerize. Functionally, proposed core component of the chromatin remodeling INO80 complex which is involved in transcriptional regulation, DNA replication and probably DNA repair. Strongly prefer nucleosomes and H3-H4 tetramers over H2A-H2B dimers, suggesting it may act as a nucleosome recognition module within the complex. This is Actin-related protein 8 from Dictyostelium discoideum (Social amoeba).